Consider the following 463-residue polypeptide: Cysteine--tRNA ligase (463 aa).

Cys-28 is a Zn(2+) binding site. The short motif at 30-40 is the 'HIGH' region element; that stretch reads VTIYDLCHIGH. The Zn(2+) site is built by Cys-209, His-234, and Glu-238. Residues 266-270 carry the 'KMSKS' region motif; that stretch reads KMSKS. Lys-269 is an ATP binding site.

The protein belongs to the class-I aminoacyl-tRNA synthetase family. Monomer. It depends on Zn(2+) as a cofactor.

The protein resides in the cytoplasm. It catalyses the reaction tRNA(Cys) + L-cysteine + ATP = L-cysteinyl-tRNA(Cys) + AMP + diphosphate. This Tolumonas auensis (strain DSM 9187 / NBRC 110442 / TA 4) protein is Cysteine--tRNA ligase.